A 115-amino-acid polypeptide reads, in one-letter code: DNA-directed RNA polymerase II subunit RPB11-b1 (115 aa).

This sequence belongs to the archaeal Rpo11/eukaryotic RPB11/RPC19 RNA polymerase subunit family. In terms of assembly, component of the RNA polymerase II (Pol II) complex consisting of 12 subunits. In terms of tissue distribution, ubiquitously expressed.

The protein resides in the nucleus. Functionally, DNA-dependent RNA polymerase catalyzes the transcription of DNA into RNA using the four ribonucleoside triphosphates as substrates. Component of RNA polymerase II which synthesizes mRNA precursors and many functional non-coding RNAs. Pol II is the central component of the basal RNA polymerase II transcription machinery. It is composed of mobile elements that move relative to each other. RPB11 is part of the core element with the central large cleft. The chain is DNA-directed RNA polymerase II subunit RPB11-b1 (POLR2J2) from Homo sapiens (Human).